Consider the following 582-residue polypeptide: Aspartate--tRNA ligase (582 aa).

Residue Glu-174 coordinates L-aspartate. The aspartate stretch occupies residues 198 to 201 (QITK). Arg-220 contacts L-aspartate. Residues 220–222 (RDE) and Gln-229 each bind ATP. His-443 is a binding site for L-aspartate. Glu-477 serves as a coordination point for ATP. An L-aspartate-binding site is contributed by Arg-484. An ATP-binding site is contributed by 529-532 (GLDR).

The protein belongs to the class-II aminoacyl-tRNA synthetase family. Type 1 subfamily. Homodimer.

The protein resides in the cytoplasm. It catalyses the reaction tRNA(Asp) + L-aspartate + ATP = L-aspartyl-tRNA(Asp) + AMP + diphosphate. Its function is as follows. Catalyzes the attachment of L-aspartate to tRNA(Asp) in a two-step reaction: L-aspartate is first activated by ATP to form Asp-AMP and then transferred to the acceptor end of tRNA(Asp). The chain is Aspartate--tRNA ligase from Streptococcus pyogenes serotype M5 (strain Manfredo).